A 213-amino-acid polypeptide reads, in one-letter code: Neuroligin-4, X-linked (213 aa).

Residues 1-56 (FQYVSTTTKVPPPDMTSFPYGTRRSPAKIWPTTKRPAITPANNPKHSKDPHKTGPE) form a disordered region. Residues 1 to 73 (FQYVSTTTKV…TKRDYSTELS (73 aa)) lie on the Extracellular side of the membrane. The segment covering 46–55 (HSKDPHKTGP) has biased composition (basic and acidic residues). Residues 74–94 (VTIAVGASLLFLNILAFAALY) traverse the membrane as a helical segment. The Cytoplasmic segment spans residues 95–213 (YKKDKRRHET…LPHGHSTTRV (119 aa)). Position 109 is a phosphoserine (serine 109).

It belongs to the type-B carboxylesterase/lipase family. In terms of assembly, homodimer. Interacts with NRXN1 in a calcium-dependent manner. Interaction with neurexins is mediated by heparan sulfate glycan modification on neurexin. Interacts through its C-terminus with DLG4/PSD-95 third PDZ domain.

The protein resides in the cell membrane. Its subcellular location is the postsynaptic density membrane. Cell surface protein involved in cell-cell-interactions via its interactions with neurexin family members. The chain is Neuroligin-4, X-linked (NLGN4X) from Macaca mulatta (Rhesus macaque).